The following is a 42-amino-acid chain: MQDVKTYLSTAPVLAAIWFGILAGLLIEINRFFPDALVLPYV.

The chain crosses the membrane as a helical span at residues 7 to 27; the sequence is YLSTAPVLAAIWFGILAGLLI.

It belongs to the PsaJ family.

Its subcellular location is the plastid. The protein localises to the chloroplast thylakoid membrane. In terms of biological role, may help in the organization of the PsaE and PsaF subunits. The chain is Photosystem I reaction center subunit IX from Staurastrum punctulatum (Green alga).